The chain runs to 1025 residues: Myosin phosphatase Rho-interacting protein (1025 aa).

Positions 2–383 are interaction with F-actin; the sequence is SAAKENPCRK…DRRSTEPSVT (382 aa). In terms of domain architecture, PH 1 spans 43–150; it reads KPIYGGWLLL…WLEMLMVYPR (108 aa). Disordered stretches follow at residues 152–302 and 317–383; these read NKQN…RRSQ and HMET…PSVT. The span at 179 to 189 shows a compositional bias: low complexity; the sequence is SSSSSSSSSSS. Phosphoserine is present on residues S192, S217, S218, S220, S224, and S226. Residues 217–236 are compositionally biased toward low complexity; sequence SSLSPAQSPSQSQPPAASSL. Residues 239 to 263 show a composition bias toward basic and acidic residues; it reads PGLESKEEESAMSSDRMDCGRKVRV. S265 and S269 each carry phosphoserine. Residues 271–281 show a composition bias toward basic and acidic residues; that stretch reads EKTKQDLKAEE. Pro residues predominate over residues 284–294; the sequence is LPPPLSPPSPS. 2 positions are modified to phosphoserine: S289 and S292. Position 295 is a phosphothreonine (T295). Residue S326 is modified to Phosphoserine. The span at 332–348 shows a compositional bias: basic and acidic residues; the sequence is RQGRSEKRAFPRKRDFT. T348 is modified (phosphothreonine). Phosphoserine occurs at positions 362 and 365. The PH 2 domain maps to 387–483; that stretch reads LNFKKGWLTK…WIQTIMKHVH (97 aa). Disordered regions lie at residues 485–545 and 560–591; these read TTAP…TFDW and VGGV…RREE. The residue at position 493 (S493) is a Phosphoserine. 2 stretches are compositionally biased toward basic and acidic residues: residues 524–545 and 567–589; these read PEQK…TFDW and DTHE…ARRR. Positions 546–824 are interaction with RHOA; the sequence is AEFRPIQQAL…SVQRELEVLS (279 aa). S619 carries the post-translational modification Phosphoserine. A Phosphothreonine modification is found at T646. A phosphoserine mark is found at S663 and S800. Positions 673-977 form a coiled coil; sequence HELTSLLEKE…AATEALGEKS (305 aa). Positions 824–879 are interaction with PPP1R12A; that stretch reads SEQYSQKCLENAHLAQALEAERQALRQCQRENQELNAHNQELNNRLAAEITRLRTL. Residues S891, S977, S993, S1014, and S1016 each carry the phosphoserine modification.

In terms of assembly, binds F-actin through its N-terminus. Interacts with MYZAP. Binds RHOA, PPP1R12A/MBS and PPP1R12C/MBS85 through adjacent coiled coil domains.

It is found in the cytoplasm. Its subcellular location is the cytoskeleton. Its function is as follows. Targets myosin phosphatase to the actin cytoskeleton. Required for the regulation of the actin cytoskeleton by RhoA and ROCK1. Depletion leads to an increased number of stress fibers in smooth muscle cells through stabilization of actin fibers by phosphorylated myosin. Overexpression of MRIP as well as its F-actin-binding region leads to disassembly of stress fibers in neuronal cells. The sequence is that of Myosin phosphatase Rho-interacting protein (MPRIP) from Homo sapiens (Human).